Here is a 635-residue protein sequence, read N- to C-terminus: Rab11 family-interacting protein 4 (635 aa).

Positions 49-84 (GQGEEVEKLVKCLDPNDLGRINFKDFCRGVFAMKGC) constitute an EF-hand domain. Positions 62, 64, 68, and 73 each coordinate Ca(2+). The segment at 82–635 (KGCEELLKDV…HNPSILEIKH (554 aa)) is necessary for interaction with RAB11A, subcellular location, homo- or heterooligomerization. 2 disordered regions span residues 147–176 (GPQE…EKEP) and 216–258 (EDYG…QTPR). Acidic residues predominate over residues 216–225 (EDYGEGDDVD). Residues 279-615 (KINLLNDLEA…EEINFRLRQY (337 aa)) adopt a coiled-coil conformation. Residues 572–634 (EAKNLFATQT…DHNPSILEIK (63 aa)) enclose the FIP-RBD domain.

As to quaternary structure, homodimer. Forms a complex with Rab11 (RAB11A or RAB11B) and ARF6. Interacts with RAB11A; the interaction is direct. Forms a heterooligomeric complex with RAB11FIP2, RAB11FIP3 and RAB11FIP5. Interacts with ECPAS. Strongly expressed in the developing retina. Expressed predominantly in neural tissues.

Its subcellular location is the recycling endosome membrane. The protein localises to the cleavage furrow. It is found in the midbody. It localises to the cytoplasmic vesicle. In terms of biological role, acts as a regulator of endocytic traffic by participating in membrane delivery. Required for the abscission step in cytokinesis, possibly by acting as an 'address tag' delivering recycling endosome membranes to the cleavage furrow during late cytokinesis. May play a role in differentiation during retinal development, in a Rab11-independent manner. The sequence is that of Rab11 family-interacting protein 4 (Rab11fip4) from Mus musculus (Mouse).